Here is a 209-residue protein sequence, read N- to C-terminus: Abscisic acid receptor PYL3 (209 aa).

Positions 1 to 23 (MNLAPIHDPSSSSTTTTSSSTPY) are disordered. Low complexity predominate over residues 10–21 (SSSSTTTTSSST). Residues 43-205 (FPRSPNTCTS…NLQNLAVIST (163 aa)) form an START-like region. Abscisate contacts are provided by residues lysine 79, 113–118 (ASTSVE), 140–146 (RLNNYRS), and glutamate 170. A Gate loop motif is present at residues 109–113 (SGLPA). The Latch loop motif lies at 139-141 (HRL).

The protein belongs to the PYR/PYL/RCAR abscisic acid intracellular receptor family. As to quaternary structure, homodimer and monomer. Binds ABA on one subunit only. ABA-binding favors monomer and trans-homodimer intermediate, and increases PP2C inhibitor activity. Binds both (-)-ABA and (+)-ABA. Binds to CARs protein in an ABA-independent manner, both at the plasma membrane and in the nucleus. Interacts with HAB1, ABI1 and ABI2, and possibly with other PP2Cs.

The protein resides in the cytoplasm. It is found in the nucleus. It localises to the cell membrane. In terms of biological role, receptor for abscisic acid (ABA) required for ABA-mediated responses such as stomatal closure and germination inhibition. Inhibits the activity of group-A protein phosphatases type 2C (PP2Cs) when activated by ABA. Can be activated by both (-)-ABA and (+)-ABA. This chain is Abscisic acid receptor PYL3 (PYL3), found in Arabidopsis thaliana (Mouse-ear cress).